A 242-amino-acid chain; its full sequence is Aspartate/glutamate leucyltransferase (242 aa).

Belongs to the R-transferase family. Bpt subfamily.

It is found in the cytoplasm. The catalysed reaction is N-terminal L-glutamyl-[protein] + L-leucyl-tRNA(Leu) = N-terminal L-leucyl-L-glutamyl-[protein] + tRNA(Leu) + H(+). The enzyme catalyses N-terminal L-aspartyl-[protein] + L-leucyl-tRNA(Leu) = N-terminal L-leucyl-L-aspartyl-[protein] + tRNA(Leu) + H(+). Functionally, functions in the N-end rule pathway of protein degradation where it conjugates Leu from its aminoacyl-tRNA to the N-termini of proteins containing an N-terminal aspartate or glutamate. This is Aspartate/glutamate leucyltransferase from Alcanivorax borkumensis (strain ATCC 700651 / DSM 11573 / NCIMB 13689 / SK2).